A 703-amino-acid chain; its full sequence is Neoverrucotoxin subunit alpha (703 aa).

N-acetylserine is present on serine 2. The region spanning 508-703 (PRMPFVQGYK…RFDHGTVRLL (196 aa)) is the B30.2/SPRY domain.

It belongs to the SNTX/VTX toxin family. Heterodimer of alpha and beta subunits. Not glycosylated. In terms of processing, four intrachain disulfide linkages are present in the heterodimer. No interchain disulfide bound links the two subunits. Expressed by the venom gland.

The protein localises to the secreted. In terms of biological role, has hemolytic and lethal activities. Its hemolytic activity is inhibited by anionic lipids, especially potently by cardiolipin. The sequence is that of Neoverrucotoxin subunit alpha from Synanceia verrucosa (Reef stonefish).